A 99-amino-acid polypeptide reads, in one-letter code: MPAVIDKALDFIGAMDVSAPTPSSMNESTAKGIFKYLKELGVPASAADITARADQEGWNPGFTEKMVGWAKKMETGERSVIKNPEYFSTYMQEELKALV.

This is an uncharacterized protein from Escherichia coli O157:H7.